We begin with the raw amino-acid sequence, 221 residues long: Probable glutathione S-transferase parC (221 aa).

The GST N-terminal domain maps to 4–83; the sequence is EEVILLDFWP…YIEEVWKDKA (80 aa). Residues Ser-14, Lys-41, Ile-55, and 67–68 contribute to the glutathione site; that span reads ES. The GST C-terminal domain maps to 90-214; it reads DPYDRAQARF…PKVLEFVKVL (125 aa).

The protein belongs to the GST superfamily. Phi family. In terms of tissue distribution, abundant in seedlings and roots. It is also found in the shoot tips, flowers and leaves.

The catalysed reaction is RX + glutathione = an S-substituted glutathione + a halide anion + H(+). Conjugation of reduced glutathione to a wide number of exogenous and endogenous hydrophobic electrophiles. This Nicotiana tabacum (Common tobacco) protein is Probable glutathione S-transferase parC (PARC).